Consider the following 1167-residue polypeptide: Melanoma receptor tyrosine-protein kinase (1167 aa).

The signal sequence occupies residues 1-25 (MEFLRGGAALLQLLLVLSISRCCST). At 26 to 642 (DPDRKVCQGT…GCRGDIVSHS (617 aa)) the chain is on the extracellular side. Residues asparagine 114, asparagine 144, and asparagine 201 are each glycosylated (N-linked (GlcNAc...) asparagine). Disulfide bonds link cysteine 195–cysteine 204, cysteine 199–cysteine 212, cysteine 220–cysteine 228, cysteine 224–cysteine 236, cysteine 237–cysteine 245, cysteine 241–cysteine 253, cysteine 256–cysteine 265, cysteine 269–cysteine 296, cysteine 300–cysteine 311, cysteine 315–cysteine 330, and cysteine 333–cysteine 337. Asparagine 356, asparagine 365, asparagine 398, asparagine 417, and asparagine 501 each carry an N-linked (GlcNAc...) asparagine glycan. Intrachain disulfides connect cysteine 504–cysteine 513, cysteine 508–cysteine 521, cysteine 524–cysteine 533, cysteine 537–cysteine 553, cysteine 556–cysteine 569, cysteine 560–cysteine 577, cysteine 593–cysteine 615, cysteine 618–cysteine 626, and cysteine 622–cysteine 634. Asparagine 576 carries an N-linked (GlcNAc...) asparagine glycan. The N-linked (GlcNAc...) asparagine glycan is linked to asparagine 621. The helical transmembrane segment at 643–665 (SLAVGLVSGLLITVIVALLIVVL) threads the bilayer. Residues 666-1167 (LRRRRIKRKR…QGGALYTPVR (502 aa)) are Cytoplasmic-facing. The Protein kinase domain maps to 710–977 (FKKDRVLGSG…QMARDPSRYL (268 aa)). ATP-binding positions include 716–724 (LGSGAFGTV) and lysine 743. Aspartate 835 serves as the catalytic Proton acceptor.

Belongs to the protein kinase superfamily. Tyr protein kinase family. EGF receptor subfamily.

The protein resides in the membrane. It catalyses the reaction L-tyrosyl-[protein] + ATP = O-phospho-L-tyrosyl-[protein] + ADP + H(+). Functionally, probable receptor with tyrosine-protein kinase activity. This is Melanoma receptor tyrosine-protein kinase (xmrk) from Xiphophorus maculatus (Southern platyfish).